A 2271-amino-acid chain; its full sequence is MKRNQLKSWIFELREIKNSHYFVDSWDKFDSVGSFTYIFFHQERFMKLFDPRILSILLSHDSQDLTRNRYFNFTIKGVVLLVMGVLIFIFIYRINNRNMVERKNLYLMGLLPIPMNSIGLRNDTLEESFLSSNINRLIVSLLYLPKEKKISESFFMDPKGRSWVLPITKKCIVPESNWDLRGWRNRIVKKRDSSCKISNKRVAGIEISFKDKDIKYLEFLFVSYTDDPIRKDRDWELFDRLSPRKKRNIINLNSGQRFEILVKHLICYLMPAFHEKGSIEVEGFFKQQGAQATIQSNDIEHLSHLFSRNKWGISLQNCAQFHMWQFHQDLFVSWGKNKHESHFFRNVSRENWIWLDNVWLVNNDRFFSKVRNVSSNIQYDSTRSIFVQVTDSSQLKGSSDQSRDPFDSISNESSKYHTLINQTEIQQLKERLILLDPSFRQMERTETEREKQMDNHLFPAEVKKCLGNPTRSIRSFFSDRWSELPLGSNPTERSTRDQKLLKKQQDVSFVPSRRSENKEMFDIFKIITYLQNTVSIHPISSDPDMVPKDEPDRDSSNKISFLNKNPFFDLFHLFHDRNKEGYTFHYDFESEERFPEMSDLFTLSITEPNLVYHKGFAFSIDSYGLDQKKFLNEVSWDESKKKSFLVLPHIFYEENESFYRRIRRKSGRISCRNGLEEKKKKIVVFASNNIMGAVNQYRLIRDLIQIQYSPHGYIRNRLNRFLLMNRSDHNFEYGIQRDQIGNDTLNHITIMKYTINQHLSNLIKNRKKWHDSHSLIFPTERSMNRDPDAYRYKWSNESNNFQEHFEHFVSEQKNHFQVVFNQFRINQYSIDWSEVIDKQDLSKSFRFFLSNSLLFFSKSLPLFFLSIGNIPIHSREIHIYEFKGPNHQLCNQLLESIGVQIVHLKKLKPFLLDDHDISQRSKLLINGGTISPLFFNKIQGWVIDSFHIRKNRRKYLYNMDSYFSMISHDRDNCMNPVKPFHRSSLISSFYKANRLPFLNNSHRFWFYCDKRFPFYVEVEKARINNYDLAYAQFLNISFIRNKIFSLCVGKKKKPFLEIDAISPIESQVSDIFIPNDFPQSGDERYNLYKSFYFPTRSDLFVRRAIYSIADIFETPLTEGQIVHFERTYCQPLSDINLSESEGNNLHQYLSFNSNMGLIRIPCSEKYLPSRKRKKRSLCLKKCVEKRQMYRTFQRNSAFSNLSKWNLFQTYMPWFFTSTGCKYINLIFLDTFADPLPILSSSQKFLSIFHDIMHGSDILWPTENLSLLEAWSKIPLSQKKWWTILPQSNLISEISSKCLQNLLLSEEMIHRNNESPASLIWTHLIAPNAREFLYSILFLLLVAGYLVRTHLLFVSQTSSELQTEFEKIKSLMIPSYMVEVRKLLDRYPPLELNFLWLKNLFLVALEQLEDFMEKIWGSASGGNILLGGGPTYGVKSIRSKKKDLNINLIDIISIISNPINLITFSRKTRDLSRTSKEIYSWIRQRKNVNSDWIDDKIESWVANNDWIDDEEREFLVQFSTLTTEKRIDQILLSLTHSDRLSKNDSGYQMIEQPGSIYLRYLVDIHQKYLMNYEFSRFCLAERRIFLAHYQTITYSQSSCIANSSHFRSHGKPVSLRLVLSPSRGILVIGSIGTGRSYLVKYLATNSYVPFITVFPNKLLDDKPKDYFSDDIDIDESDDLNYDLDTELLTMTNVLTMYMTLKMDQFDITLQFELAEEMSPCIIWIPNIHELYVNESNYLSLSLLVNYLSRDCERCSTRNILVIASTPIPQKVDPALIAPNKSNTCIKIRRLLIPQERKHFFILSSTRGFHLEKKMFHTNRFGSISMGSNARDLVALTSEALSISITQKKSIIDTNTIKSALHRQTWDLRSQVRPVQDHGILFYQIGRAVAQNALLSNCSINPISIYMKKKSCKKGDSYLYKWYFELGTSMKKLTILLYLLSCSAGSVAQDLWSTSGPDEKNGITSYGFVENDSDLVHGLLEGVLVGSSRTEKDCSQFDNAQAQVTLLLRSEPRNQLDMMQNGSCSIVDQRFLYEKYESEFEEGEREGALDPQQIEEDLFNHIVWAPRTRIRRPCGNLFDCIERTNELGFPYWARSFRGKRIIYHKEDELQENDSEFLQSGTMQYQTRDRSSKEQGFFRISQFIWDPADPFFFLFKDQPFVSVFSRREFFADEEMSKGLITSQTNPPTSIYKRWFIKNTQEKHFELLIHRQRWLRTNSSLSNGSFRSNTPSESYQYLSNLFLSNGTLLDQMTKALLRKRWLFPDEMKHLIHVTG.

1628 to 1635 contributes to the ATP binding site; the sequence is GSIGTGRS.

Belongs to the Ycf2 family.

The protein localises to the plastid. The protein resides in the chloroplast stroma. Probable ATPase of unknown function. Its presence in a non-photosynthetic plant (Epifagus virginiana) and experiments in tobacco indicate that it has an essential function which is probably not related to photosynthesis. This chain is Protein Ycf2, found in Illicium oligandrum (Star anise).